The primary structure comprises 459 residues: Cysteine--tRNA ligase (459 aa).

Zn(2+) is bound at residue C29. The 'HIGH' region signature appears at 31 to 41 (MTVYDLCHLGH). Zn(2+) contacts are provided by C213, H238, and E242. The 'KMSKS' region signature appears at 270-274 (KMSKS). Residue K273 coordinates ATP.

Belongs to the class-I aminoacyl-tRNA synthetase family. Monomer. Zn(2+) serves as cofactor.

Its subcellular location is the cytoplasm. The enzyme catalyses tRNA(Cys) + L-cysteine + ATP = L-cysteinyl-tRNA(Cys) + AMP + diphosphate. This chain is Cysteine--tRNA ligase, found in Albidiferax ferrireducens (strain ATCC BAA-621 / DSM 15236 / T118) (Rhodoferax ferrireducens).